Consider the following 127-residue polypeptide: Succinate dehydrogenase cytochrome b560 subunit (127 aa).

Helical transmembrane passes span Val-36–Leu-53 and Asn-60–Leu-83. Residue His-88 coordinates heme. A helical membrane pass occupies residues Leu-109–Phe-126.

It belongs to the cytochrome b560 family. As to quaternary structure, forms part of complex II containing four subunits: a 70 kDa flavoprotein (FP), a 27 kDa iron-sulfur protein (IP), a cytochrome B and a membrane-anchoring protein. Heme is required as a cofactor.

The protein localises to the mitochondrion inner membrane. The protein operates within carbohydrate metabolism; tricarboxylic acid cycle. In terms of biological role, membrane-anchoring subunit of succinate dehydrogenase (SDH) that is involved in complex II of the mitochondrial electron transport chain and is responsible for transferring electrons from succinate to ubiquinone (coenzyme Q). The protein is Succinate dehydrogenase cytochrome b560 subunit (SDH3) of Chondrus crispus (Carrageen Irish moss).